Consider the following 389-residue polypeptide: Succinate--CoA ligase [ADP-forming] subunit beta (389 aa).

Residues 9 to 244 (KELLRQFNVP…IDEEDAAEIE (236 aa)) enclose the ATP-grasp domain. Residues lysine 46, 53–55 (GRG), glutamate 99, alanine 102, and glutamate 107 contribute to the ATP site. Mg(2+) is bound by residues asparagine 199 and aspartate 213. Substrate contacts are provided by residues asparagine 264 and 321–323 (GIM).

Belongs to the succinate/malate CoA ligase beta subunit family. In terms of assembly, heterotetramer of two alpha and two beta subunits. Mg(2+) serves as cofactor.

The enzyme catalyses succinate + ATP + CoA = succinyl-CoA + ADP + phosphate. It catalyses the reaction GTP + succinate + CoA = succinyl-CoA + GDP + phosphate. It participates in carbohydrate metabolism; tricarboxylic acid cycle; succinate from succinyl-CoA (ligase route): step 1/1. In terms of biological role, succinyl-CoA synthetase functions in the citric acid cycle (TCA), coupling the hydrolysis of succinyl-CoA to the synthesis of either ATP or GTP and thus represents the only step of substrate-level phosphorylation in the TCA. The beta subunit provides nucleotide specificity of the enzyme and binds the substrate succinate, while the binding sites for coenzyme A and phosphate are found in the alpha subunit. This chain is Succinate--CoA ligase [ADP-forming] subunit beta, found in Polynucleobacter asymbioticus (strain DSM 18221 / CIP 109841 / QLW-P1DMWA-1) (Polynucleobacter necessarius subsp. asymbioticus).